We begin with the raw amino-acid sequence, 97 residues long: Putative ankyrin repeat protein RBE_0357 (97 aa).

The stretch at 24-54 (YGKTALHYAYTKRNIDIIKILLKCPGIKICI) is one ANK repeat.

The sequence is that of Putative ankyrin repeat protein RBE_0357 from Rickettsia bellii (strain RML369-C).